Consider the following 1588-residue polypeptide: Autotransporter adhesin EhaG (1588 aa).

Residues Met-1 to Ala-53 form the signal peptide. The surface exposed passenger domain stretch occupies residues Asn-54 to Arg-1499. A translocator domain region spans residues Met-1500 to Trp-1588. Transmembrane regions (beta stranded) follow at residues Gly-1534–Thr-1544, Glu-1548–Val-1558, Lys-1567–Asn-1573, and Glu-1577–Trp-1588.

Belongs to the autotransporter-2 (AT-2) (TC 1.B.40) family. As to quaternary structure, homotrimer.

It is found in the cell surface. The protein localises to the cell outer membrane. Functionally, mediates aggregation, biofilm formation and adhesion to a range of extracellular matrix (ECM) proteins, such as fibronectin, fibrinogen, laminin and collagen types I, II, III, and V. Mediates adhesion to intestinal epithelial cells. This is Autotransporter adhesin EhaG from Escherichia coli O157:H7.